Consider the following 438-residue polypeptide: Gamma-glutamyl phosphate reductase (438 aa).

The protein belongs to the gamma-glutamyl phosphate reductase family.

The protein resides in the cytoplasm. The catalysed reaction is L-glutamate 5-semialdehyde + phosphate + NADP(+) = L-glutamyl 5-phosphate + NADPH + H(+). It participates in amino-acid biosynthesis; L-proline biosynthesis; L-glutamate 5-semialdehyde from L-glutamate: step 2/2. Functionally, catalyzes the NADPH-dependent reduction of L-glutamate 5-phosphate into L-glutamate 5-semialdehyde and phosphate. The product spontaneously undergoes cyclization to form 1-pyrroline-5-carboxylate. This is Gamma-glutamyl phosphate reductase from Prochlorococcus marinus (strain MIT 9313).